We begin with the raw amino-acid sequence, 117 residues long: MIHILFIMVGGGIGAVIRAWLTDVFKSKITSPIPIATLIVNLVGSFLIGFVYGIAQDYQLFSLFFITGVLGGLTTFSTLSYEIVQFISPSFKPVQFFSYSILQFVIGFISCFIGYSI.

4 helical membrane passes run 1 to 21 (MIHILFIMVGGGIGAVIRAWL), 35 to 55 (IATLIVNLVGSFLIGFVYGIA), 60 to 80 (LFSLFFITGVLGGLTTFSTLS), and 97 to 117 (FSYSILQFVIGFISCFIGYSI). Residues Gly71 and Thr74 each coordinate Na(+).

Belongs to the fluoride channel Fluc/FEX (TC 1.A.43) family.

The protein localises to the cell membrane. It catalyses the reaction fluoride(in) = fluoride(out). Its activity is regulated as follows. Na(+) is not transported, but it plays an essential structural role and its presence is essential for fluoride channel function. Its function is as follows. Fluoride-specific ion channel. Important for reducing fluoride concentration in the cell, thus reducing its toxicity. This chain is Fluoride-specific ion channel FluC 1, found in Staphylococcus haemolyticus (strain JCSC1435).